The sequence spans 340 residues: Extracellular matrix protein-binding protein emp (340 aa).

Positions 1 to 26 are cleaved as a signal peptide; the sequence is MKKKLLVLTMSTLFATQLINSNHAKA.

The protein resides in the cell surface. Functionally, adhesin that binds to the host cell extracellular matrix proteins fibronectin, fibrinogen, collagen, and vitronectin. The protein is Extracellular matrix protein-binding protein emp (emp) of Staphylococcus aureus (strain Mu50 / ATCC 700699).